Consider the following 77-residue polypeptide: MKLTCMMIVAVLFLTAWTFVTADDSGNGMEILFPKAGHEMENLEVSNRVKPCRKEGQLCDPIFQNCCRGWNCVLFCV.

The signal sequence occupies residues 1-22; that stretch reads MKLTCMMIVAVLFLTAWTFVTA. Positions 23–48 are excised as a propeptide; it reads DDSGNGMEILFPKAGHEMENLEVSNR. Intrachain disulfides connect Cys-52/Cys-67, Cys-59/Cys-72, and Cys-66/Cys-76.

It belongs to the conotoxin O1 superfamily. In terms of tissue distribution, expressed by the venom duct.

Its subcellular location is the secreted. Its function is as follows. Delta-conotoxins bind to site 6 of voltage-gated sodium channels (Nav) and inhibit the inactivation process. This toxin shows weak activity on rNav1.2/SCN2A (EC(50)=2.5 uM) and rNav1.4/SCN4A (EC(50)=4.8 uM). In vivo, injection of this peptide in the head region of garden snail induces retraction of the head and body into shell. This is followed by secretion of viscous green slime and a convulsive undulation into and out of the shell. No apparent biological activity was observed when a much greater dose of peptide was injected intraperitoneally into mice. The polypeptide is Delta-conotoxin GmVIA (Conus gloriamaris (Glory-of-the-Sea cone)).